The primary structure comprises 415 residues: Phakinin (415 aa).

The disordered stretch occupies residues 1 to 26 (MSTRRVVVDAPAGASSSMPLQRHKAS). The residue at position 2 (Ser2) is an N-acetylserine. Residues 2-114 (STRRVVVDAP…LGAVEDLGGC (113 aa)) are head. Residues Ser26, Ser32, and Ser35 each carry the phosphoserine modification. Thr53 is subject to Phosphothreonine. Ser90 and Ser100 each carry phosphoserine. Residues 104–415 (DLGAVEDLGG…HALLDREESS (312 aa)) enclose the IF rod domain. Coiled coils occupy residues 115 to 144 (LVEYMAKVHALEKVSQELEAQLRMHLESKA), 199 to 248 (RKAA…VKML), and 295 to 395 (QAKQ…LSHK). The segment at 396–415 (CQLQRDVASYHALLDREESS) is tail.

It belongs to the intermediate filament family. Part of a complex required for lens intermediate filament formation composed of BFSP1, BFSP2 and CRYAA. Found in a complex composed of PPL (via C-terminal linker domain), BFSP1 and BFSP2 in the retinal lens. Within the complex interacts with PPL (via C-terminal linker domain) and with BFSP1. Identified in a complex that contains VIM, EZR, AHNAK, BFSP1, BFSP2, ANK2, PLEC, PRX and spectrin. Interacts with LGSN. Interacts with VIM. Abundantly expressed in both the inner and outer cortex of the retina, expressed at a lower level in the nucleus of the retina (at protein level). Detected in eye lens fiber cells (at protein level).

The protein resides in the cell membrane. The protein localises to the cytoplasm. It is found in the cytoskeleton. It localises to the cell cortex. Required for the correct formation of lens intermediate filaments as part of a complex composed of BFSP1, BFSP2 and CRYAA. Plays a role in maintenance of retinal lens optical clarity. The sequence is that of Phakinin (BFSP2) from Bos taurus (Bovine).